A 312-amino-acid chain; its full sequence is Polyhedral envelope protein (312 aa).

This sequence belongs to the baculoviridae PE family.

Its subcellular location is the virion membrane. Its function is as follows. Major component of the polyhedra envelope. This chain is Polyhedral envelope protein, found in Lymantria dispar multicapsid nuclear polyhedrosis virus (LdMNPV).